A 590-amino-acid polypeptide reads, in one-letter code: Rho GTPase-activating protein 36 (590 aa).

The Rho-GAP domain maps to 214 to 414 (MSLNPIAQQI…AMIDNWDILF (201 aa)). The interval 526-590 (IPNNEDTDSD…KGKFATRFFP (65 aa)) is disordered.

In terms of assembly, may interacts (via the Rho-GAP domain) with the active form of RAC1.

GTPase activator for the Rho-type GTPases by converting them to an inactive GDP-bound state. The protein is Rho GTPase-activating protein 36 (Arhgap36) of Mus musculus (Mouse).